The primary structure comprises 356 residues: Protein RecA (356 aa).

75 to 82 (GPESSGKT) contacts ATP.

The protein belongs to the RecA family.

The protein localises to the cytoplasm. In terms of biological role, can catalyze the hydrolysis of ATP in the presence of single-stranded DNA, the ATP-dependent uptake of single-stranded DNA by duplex DNA, and the ATP-dependent hybridization of homologous single-stranded DNAs. It interacts with LexA causing its activation and leading to its autocatalytic cleavage. In Burkholderia mallei (strain ATCC 23344), this protein is Protein RecA.